Consider the following 504-residue polypeptide: Cytochrome P450 2S1 (504 aa).

C440 provides a ligand contact to heme.

Belongs to the cytochrome P450 family. Heme serves as cofactor. In terms of tissue distribution, expressed at higher levels in extrahepatic tissues including trachea, lung, stomach, small intestine, colon, kidney, breast, placenta and spleen. Expressed in peripheral blood leukocytes. Constitutively expressed in skin (at protein level).

The protein resides in the endoplasmic reticulum membrane. It localises to the microsome membrane. It catalyses the reaction all-trans-retinoate + reduced [NADPH--hemoprotein reductase] + O2 = all-trans-5,6-epoxyretinoate + oxidized [NADPH--hemoprotein reductase] + H2O + H(+). The enzyme catalyses all-trans-retinoate + reduced [NADPH--hemoprotein reductase] + O2 = all-trans-4-hydroxyretinoate + oxidized [NADPH--hemoprotein reductase] + H2O + H(+). It carries out the reaction (5S)-hydroperoxy-(6E,8Z,11Z,14Z)-eicosatetraenoate = 5-oxo-(6E,8Z,11Z,14Z)-eicosatetraenoate + H2O. The catalysed reaction is (12S)-hydroperoxy-(5Z,8Z,10E,14Z)-eicosatetraenoate = 12-oxo-(5Z,8Z,10E,14Z)-eicosatetraenoate + H2O. It catalyses the reaction (15S)-hydroperoxy-(5Z,8Z,11Z,13E)-eicosatetraenoate = 15-oxo-(5Z,8Z,11Z,13E)-eicosatetraenoate + H2O. The enzyme catalyses prostaglandin H2 = thromboxane A2. It carries out the reaction prostaglandin H2 = (12S)-hydroxy-(5Z,8E,10E)-heptadecatrienoate + malonaldehyde. The catalysed reaction is (13S)-hydroperoxy-(9Z,11E)-octadecadienoate = 13-oxo-(9Z,11E)-octadecadienoate + H2O. It participates in lipid metabolism; fatty acid metabolism. Functionally, a cytochrome P450 monooxygenase involved in the metabolism of retinoids and eicosanoids. In epidermis, may contribute to the oxidative metabolism of all-trans-retinoic acid. For this activity, uses molecular oxygen inserting one oxygen atom into a substrate, and reducing the second into a water molecule, with two electrons provided by NADPH via cytochrome P450 reductase (NADPH--hemoprotein reductase). Additionally, displays peroxidase and isomerase activities toward various oxygenated eicosanoids such as prostaglandin H2 (PGH2) and hydroperoxyeicosatetraenoates (HPETEs). Independently of cytochrome P450 reductase, NADPH, and O2, catalyzes the breakdown of PGH2 to hydroxyheptadecatrienoic acid (HHT) and malondialdehyde (MDA), which is known to act as a mediator of DNA damage. In Homo sapiens (Human), this protein is Cytochrome P450 2S1.